Here is a 652-residue protein sequence, read N- to C-terminus: Regulator of DNA class I crossover intermediates 1 (652 aa).

Residues 1–231 (MNWVGGSRSR…TLFERLNSLG (231 aa)) constitute a DNA-binding region (binds DNA containing a D-loop). 2 disordered regions span residues 363-434 (NKTS…NIPS) and 469-506 (KISL…EDQI). The span at 377–388 (YQREYNKNERND) shows a compositional bias: basic and acidic residues. The segment covering 389-401 (LSTSFENDYYPSS) has biased composition (polar residues). Residues 402 to 417 (SERKEKFENDYQEKTP) show a composition bias toward basic and acidic residues. The span at 473-498 (DSAQSSRSTSYSPRPTDSCFSSSSDL) shows a compositional bias: low complexity.

As to quaternary structure, interacts with MSH5. Interacts with TEX11.

The protein localises to the chromosome. In terms of biological role, involved in recombination, probably acting by stabilizing recombination intermediates during meiotic crossover formation. Required for normal germline development and fertility. Required for meiotic progression, complete chromosomal synapsis and crossover formation. Binds double-stranded DNA. However, also binds branched DNA molecules, such as those containing a D-loop or Holliday junction structure. Probably not required for formation of DNA double-strand breaks (DSBs). Also binds RNA in an RNA structure-independent manner, with a preference for binding 3'-UTR regions of mRNAs; may stabilize bound RNAs. This chain is Regulator of DNA class I crossover intermediates 1, found in Homo sapiens (Human).